Reading from the N-terminus, the 242-residue chain is 1-(5-phosphoribosyl)-5-[(5-phosphoribosylamino)methylideneamino] imidazole-4-carboxamide isomerase (242 aa).

Asp-10 serves as the catalytic Proton acceptor.

The protein belongs to the HisA/HisF family.

It localises to the cytoplasm. The catalysed reaction is 1-(5-phospho-beta-D-ribosyl)-5-[(5-phospho-beta-D-ribosylamino)methylideneamino]imidazole-4-carboxamide = 5-[(5-phospho-1-deoxy-D-ribulos-1-ylimino)methylamino]-1-(5-phospho-beta-D-ribosyl)imidazole-4-carboxamide. It participates in amino-acid biosynthesis; L-histidine biosynthesis; L-histidine from 5-phospho-alpha-D-ribose 1-diphosphate: step 4/9. The chain is 1-(5-phosphoribosyl)-5-[(5-phosphoribosylamino)methylideneamino] imidazole-4-carboxamide isomerase from Corynebacterium diphtheriae (strain ATCC 700971 / NCTC 13129 / Biotype gravis).